The primary structure comprises 455 residues: Serine--tRNA ligase (455 aa).

Residue 252–254 (TAE) participates in L-serine binding. ATP-binding positions include 283–285 (RKE) and Val-299. Glu-306 serves as a coordination point for L-serine. Residue 370-373 (EVVS) participates in ATP binding. Thr-406 provides a ligand contact to L-serine.

This sequence belongs to the class-II aminoacyl-tRNA synthetase family. Type-1 seryl-tRNA synthetase subfamily. In terms of assembly, homodimer. The tRNA molecule binds across the dimer.

Its subcellular location is the cytoplasm. It catalyses the reaction tRNA(Ser) + L-serine + ATP = L-seryl-tRNA(Ser) + AMP + diphosphate + H(+). It carries out the reaction tRNA(Sec) + L-serine + ATP = L-seryl-tRNA(Sec) + AMP + diphosphate + H(+). It participates in aminoacyl-tRNA biosynthesis; selenocysteinyl-tRNA(Sec) biosynthesis; L-seryl-tRNA(Sec) from L-serine and tRNA(Sec): step 1/1. Functionally, catalyzes the attachment of serine to tRNA(Ser). Is also able to aminoacylate tRNA(Sec) with serine, to form the misacylated tRNA L-seryl-tRNA(Sec), which will be further converted into selenocysteinyl-tRNA(Sec). The polypeptide is Serine--tRNA ligase (Pyrococcus abyssi (strain GE5 / Orsay)).